The chain runs to 380 residues: Beta sliding clamp (380 aa).

Belongs to the beta sliding clamp family. Forms a ring-shaped head-to-tail homodimer around DNA which binds and tethers DNA polymerases and other proteins to the DNA. The DNA replisome complex has a single clamp-loading complex (3 tau and 1 each of delta, delta', psi and chi subunits) which binds 3 Pol III cores (1 core on the leading strand and 2 on the lagging strand) each with a beta sliding clamp dimer. Additional proteins in the replisome are other copies of gamma, psi and chi, Ssb, DNA helicase and RNA primase.

It localises to the cytoplasm. Its function is as follows. Confers DNA tethering and processivity to DNA polymerases and other proteins. Acts as a clamp, forming a ring around DNA (a reaction catalyzed by the clamp-loading complex) which diffuses in an ATP-independent manner freely and bidirectionally along dsDNA. Initially characterized for its ability to contact the catalytic subunit of DNA polymerase III (Pol III), a complex, multichain enzyme responsible for most of the replicative synthesis in bacteria; Pol III exhibits 3'-5' exonuclease proofreading activity. The beta chain is required for initiation of replication as well as for processivity of DNA replication. The chain is Beta sliding clamp (dnaN) from Mycoplasma pneumoniae (strain ATCC 29342 / M129 / Subtype 1) (Mycoplasmoides pneumoniae).